A 96-amino-acid chain; its full sequence is Citrate lyase acyl carrier protein (96 aa).

Ser-14 is subject to O-(phosphoribosyl dephospho-coenzyme A)serine.

It belongs to the CitD family. In terms of assembly, oligomer with a subunit composition of (alpha,beta,gamma)6.

The protein resides in the cytoplasm. Functionally, covalent carrier of the coenzyme of citrate lyase. The polypeptide is Citrate lyase acyl carrier protein (Lactococcus lactis subsp. lactis (strain IL1403) (Streptococcus lactis)).